We begin with the raw amino-acid sequence, 455 residues long: T-box protein VegT-A (455 aa).

Disordered regions lie at residues 21–40, 229–262, and 295–346; these read SNCA…SSQD, REQE…DSPE, and ANQG…EPSS. The T-box DNA-binding region spans 57 to 230; sequence LWSQFHQEGT…HNPFAKGFRE (174 aa). Residues 229–241 show a composition bias toward basic and acidic residues; that stretch reads REQERSHKRDDVL. Positions 308–324 are enriched in polar residues; it reads GANQEQQVPTSSSNFYN.

In terms of assembly, forms a repression complex on the promoters of the nodal/nr1 and siamois genes with the maternal factors tcf7l1/tcf3 and pouf5.1/oct-25. Interacts (via C-terminus) with tcf7l1/tcf3 (via N-terminus). Also interacts with the other POU-domain transcription factors pou5f1.2/oct-91 and pou5f1.3/oct-60. In terms of tissue distribution, uniformly distributed in stage I oocytes but becomes localized to the vegetal hemisphere by stage II and remains so thereafter throughout oogenesis and the early embryonic cleavage stages. Zygotic expression parallels blastopore formation and shifts from dorsal expression in the marginal zone of late blastula and early gastrula stages to a ventral/lateral expression at the posterior end of later stage embryos. Expression is excluded from the notochord. In tailbud and tadpole stages, expressed exclusively in a subset of posterior Rohon-Beard neurons.

The protein localises to the nucleus. Functionally, transcription factor required for both mesoderm and endoderm formation in the embryo; signaling determinants and concentration levels may determine which germ layer is formed. Acts together with beta-catenin to activate genes that are responsible for mesoderm induction including wnt-8, eomes t/bra, siamois, mix1 and sox17. Directly binds to promoter DNA. Patterns the mesoderm along the dorsoventral and posterior axis. Activates siamois gene transcription when alone or in combination with beta-catenin, but inhibits siamois transcription in combination with pou5f1.1/oct-25. The chain is T-box protein VegT-A (vegt-a) from Xenopus laevis (African clawed frog).